The chain runs to 447 residues: Putative branched-chain amino acid carrier protein SAB1263c (447 aa).

12 helical membrane passes run 6 to 26 (WVIG…IFPP), 40 to 60 (ILAF…VGAL), 74 to 94 (PKFS…LFAI), 114 to 134 (SSIA…YICL), 143 to 163 (IGSL…IKGY), 193 to 213 (GYLT…VNAV), 229 to 249 (LTAG…LGYI), 290 to 310 (LLGI…IGAV), 326 to 346 (FVLV…NAVI), 350 to 370 (IPVL…ILIA), 382 to 402 (IPVI…LGWL), and 417 to 437 (LEWF…GIFV).

It belongs to the branched chain amino acid transporter family.

The protein resides in the cell membrane. Its function is as follows. Component of the transport system for branched-chain amino acids (leucine, isoleucine and valine), which is coupled to a proton motive force (Potential). Contributes to NaCl tolerance. In Staphylococcus aureus (strain bovine RF122 / ET3-1), this protein is Putative branched-chain amino acid carrier protein SAB1263c.